A 345-amino-acid chain; its full sequence is PI-PLC X domain-containing protein 1 (345 aa).

One can recognise a PI-PLC X-box domain in the interval 52–228; the sequence is QLWDVPLHHL…QVIVSYEDEA (177 aa).

Expressed at highest levels in brain and kidney. Also detected in stomach, thymus and skeletal muscle.

The protein resides in the cytoplasm. The sequence is that of PI-PLC X domain-containing protein 1 (Plcxd1) from Mus musculus (Mouse).